Reading from the N-terminus, the 156-residue chain is Cytochrome c-type biogenesis protein CcmE 1 (156 aa).

At 1-8 (MNATRRQR) the chain is on the cytoplasmic side. The helical; Signal-anchor for type II membrane protein transmembrane segment at 9-29 (LWWVICVLTAAALAVTLIVFA) threads the bilayer. Over 30 to 156 (LQRNMSYLFT…ATATPLTAPR (127 aa)) the chain is Periplasmic. Heme-binding residues include H123 and Y127. A disordered region spans residues 137–156 (AEGHAGKPIPATATPLTAPR). Positions 146–156 (PATATPLTAPR) are enriched in low complexity.

Belongs to the CcmE/CycJ family.

It localises to the cell inner membrane. Its function is as follows. Heme chaperone required for the biogenesis of c-type cytochromes. Transiently binds heme delivered by CcmC and transfers the heme to apo-cytochromes in a process facilitated by CcmF and CcmH. The polypeptide is Cytochrome c-type biogenesis protein CcmE 1 (Xanthomonas euvesicatoria pv. vesicatoria (strain 85-10) (Xanthomonas campestris pv. vesicatoria)).